Here is a 205-residue protein sequence, read N- to C-terminus: Holliday junction branch migration complex subunit RuvA (205 aa).

Positions M1–I64 are domain I. Residues T65–E143 are domain II. A flexible linker region spans residues R144 to P156. The tract at residues T157 to L205 is domain III.

The protein belongs to the RuvA family. Homotetramer. Forms an RuvA(8)-RuvB(12)-Holliday junction (HJ) complex. HJ DNA is sandwiched between 2 RuvA tetramers; dsDNA enters through RuvA and exits via RuvB. An RuvB hexamer assembles on each DNA strand where it exits the tetramer. Each RuvB hexamer is contacted by two RuvA subunits (via domain III) on 2 adjacent RuvB subunits; this complex drives branch migration. In the full resolvosome a probable DNA-RuvA(4)-RuvB(12)-RuvC(2) complex forms which resolves the HJ.

The protein resides in the cytoplasm. Its function is as follows. The RuvA-RuvB-RuvC complex processes Holliday junction (HJ) DNA during genetic recombination and DNA repair, while the RuvA-RuvB complex plays an important role in the rescue of blocked DNA replication forks via replication fork reversal (RFR). RuvA specifically binds to HJ cruciform DNA, conferring on it an open structure. The RuvB hexamer acts as an ATP-dependent pump, pulling dsDNA into and through the RuvAB complex. HJ branch migration allows RuvC to scan DNA until it finds its consensus sequence, where it cleaves and resolves the cruciform DNA. This is Holliday junction branch migration complex subunit RuvA from Shewanella baltica (strain OS223).